A 230-amino-acid polypeptide reads, in one-letter code: C-reactive protein (230 aa).

A signal peptide spans 1 to 19; the sequence is MEKLLWCLLITISFSQAFG. In terms of domain architecture, Pentraxin (PTX) spans 24 to 223; sequence SKQAFVFPGV…DVFIKPQLWP (200 aa). C55 and C114 are oxidised to a cystine. Residue N78 coordinates Ca(2+). The N-linked (GlcNAc...) asparagine glycan is linked to N147. Ca(2+) contacts are provided by E155, Q156, D157, and Q167. Cysteines 227 and 228 form a disulfide.

Belongs to the pentraxin family. Homopentamer; disulfide-linked. Pentraxin (or pentaxin) have a discoid arrangement of 5 non-covalently bound subunits. Two of the five chains form a dimer linked by two interchain disulfide bonds located in the C-terminal heptapeptide and specific to rat CRP. Interacts with FCN1; may regulate monocyte activation by FCN1. It depends on Ca(2+) as a cofactor. In terms of processing, the last two cysteines are involved either in interchain disulfide bonds or in an intrachain bond. In terms of tissue distribution, found in plasma.

It is found in the secreted. Functionally, displays several functions associated with host defense: it promotes agglutination, bacterial capsular swelling, phagocytosis and complement fixation through its calcium-dependent binding to phosphorylcholine. Can interact with DNA and histones and may scavenge nuclear material released from damaged circulating cells. In Rattus norvegicus (Rat), this protein is C-reactive protein (Crp).